Consider the following 134-residue polypeptide: Cytochrome b (134 aa).

3 helical membrane passes run 33–53 (FGSLLGVCLIIQILTGLFLAM), 77–98 (WLIRYLHANGASMFFICLFLHV), and 113–133 (WNIGVLLLFAVMATAFMGYVL). Positions 83 and 97 each coordinate heme b.

The protein belongs to the cytochrome b family. In terms of assembly, the cytochrome bc1 complex contains 11 subunits: 3 respiratory subunits (MT-CYB, CYC1 and UQCRFS1), 2 core proteins (UQCRC1 and UQCRC2) and 6 low-molecular weight proteins (UQCRH/QCR6, UQCRB/QCR7, UQCRQ/QCR8, UQCR10/QCR9, UQCR11/QCR10 and a cleavage product of UQCRFS1). This cytochrome bc1 complex then forms a dimer. It depends on heme b as a cofactor.

The protein resides in the mitochondrion inner membrane. In terms of biological role, component of the ubiquinol-cytochrome c reductase complex (complex III or cytochrome b-c1 complex) that is part of the mitochondrial respiratory chain. The b-c1 complex mediates electron transfer from ubiquinol to cytochrome c. Contributes to the generation of a proton gradient across the mitochondrial membrane that is then used for ATP synthesis. The sequence is that of Cytochrome b (MT-CYB) from Sorex shinto sadonis (Sado shrew).